Consider the following 412-residue polypeptide: Transforming growth factor beta-2 proprotein (412 aa).

An N-terminal signal peptide occupies residues 1 to 20 (MHCYLLSVFLTLDLAAVALS). N-linked (GlcNAc...) asparagine glycans are attached at residues N72, N139, and N240. Cystine bridges form between C307-C316, C315-C378, C344-C409, and C348-C411.

Belongs to the TGF-beta family. Interacts with Transforming growth factor beta-2 (TGF-beta-2) chain; interaction is non-covalent and maintains (TGF-beta-2) in a latent state. In terms of assembly, homodimer; disulfide-linked. Interacts with TGF-beta receptors (TGFBR1 and TGFBR2), leading to signal transduction. In terms of processing, the precursor proprotein is cleaved in the Golgi apparatus to form Transforming growth factor beta-2 (TGF-beta-2) and Latency-associated peptide (LAP) chains, which remain non-covalently linked, rendering TGF-beta-2 inactive.

Its subcellular location is the secreted. The protein localises to the extracellular space. The protein resides in the extracellular matrix. Precursor of the Latency-associated peptide (LAP) and Transforming growth factor beta-2 (TGF-beta-2) chains, which constitute the regulatory and active subunit of TGF-beta-2, respectively. In terms of biological role, required to maintain the Transforming growth factor beta-2 (TGF-beta-2) chain in a latent state during storage in extracellular matrix. Associates non-covalently with TGF-beta-2 and regulates its activation via interaction with 'milieu molecules', such as LTBP1 and LRRC32/GARP, that control activation of TGF-beta-2. Functionally, multifunctional protein that regulates various processes such as angiogenesis and heart development. Activation into mature form follows different steps: following cleavage of the proprotein in the Golgi apparatus, Latency-associated peptide (LAP) and Transforming growth factor beta-2 (TGF-beta-2) chains remain non-covalently linked rendering TGF-beta-2 inactive during storage in extracellular matrix. At the same time, LAP chain interacts with 'milieu molecules', such as LTBP1 and LRRC32/GARP, that control activation of TGF-beta-2 and maintain it in a latent state during storage in extracellular milieus. Once activated following release of LAP, TGF-beta-2 acts by binding to TGF-beta receptors (TGFBR1 and TGFBR2), which transduce signal. This Gallus gallus (Chicken) protein is Transforming growth factor beta-2 proprotein (TGFB2).